A 310-amino-acid chain; its full sequence is Ribosomal RNA small subunit methyltransferase H (310 aa).

Residues G32–H34, D52, F79, D100, and Q107 each bind S-adenosyl-L-methionine.

It belongs to the methyltransferase superfamily. RsmH family.

It localises to the cytoplasm. The enzyme catalyses cytidine(1402) in 16S rRNA + S-adenosyl-L-methionine = N(4)-methylcytidine(1402) in 16S rRNA + S-adenosyl-L-homocysteine + H(+). Specifically methylates the N4 position of cytidine in position 1402 (C1402) of 16S rRNA. This Bacillus anthracis (strain A0248) protein is Ribosomal RNA small subunit methyltransferase H.